The following is a 312-amino-acid chain: Glyoxylate/hydroxypyruvate reductase A (312 aa).

The active site involves Arg-227. Residue His-275 is the Proton donor of the active site.

Belongs to the D-isomer specific 2-hydroxyacid dehydrogenase family. GhrA subfamily.

It localises to the cytoplasm. The catalysed reaction is glycolate + NADP(+) = glyoxylate + NADPH + H(+). It carries out the reaction (R)-glycerate + NAD(+) = 3-hydroxypyruvate + NADH + H(+). It catalyses the reaction (R)-glycerate + NADP(+) = 3-hydroxypyruvate + NADPH + H(+). Catalyzes the NADPH-dependent reduction of glyoxylate and hydroxypyruvate into glycolate and glycerate, respectively. The chain is Glyoxylate/hydroxypyruvate reductase A from Escherichia coli O127:H6 (strain E2348/69 / EPEC).